Here is a 508-residue protein sequence, read N- to C-terminus: Serine/threonine protein kinase OSK3 (508 aa).

Residues 17 to 269 (YNLGRTLGIG…IREIREHQWF (253 aa)) form the Protein kinase domain. Residues 23-31 (LGIGSFGKV) and K46 contribute to the ATP site. D140 acts as the Proton acceptor in catalysis. One can recognise a UBA domain in the interval 290 to 330 (MIDEDTLQDVVNLGYGKDHVCESLRNRLQNEATVAYYLLLD). The region spanning 459–507 (NGRLPAVIKFEIQLYKTRDEKYLLDMQRVTGPQLLFLDFCADFLTKLRV) is the KA1 domain.

Belongs to the protein kinase superfamily. Ser/Thr protein kinase family. Interacts with HDR1. In terms of tissue distribution, strongly expressed in immature seeds. Mostly expressed in panicles, and to a lower extent, in leaf sheaths.

It is found in the nucleus. It carries out the reaction L-seryl-[protein] + ATP = O-phospho-L-seryl-[protein] + ADP + H(+). It catalyses the reaction L-threonyl-[protein] + ATP = O-phospho-L-threonyl-[protein] + ADP + H(+). The protein is Serine/threonine protein kinase OSK3 of Oryza sativa subsp. indica (Rice).